The primary structure comprises 313 residues: Probable inactive peptidyl-prolyl cis-trans isomerase-like 6 (313 aa).

Residues 147–310 form the PPIase cyclophilin-type domain; that stretch reads YLDICIDLSP…LLCSIADSGV (164 aa).

Belongs to the cyclophilin-type PPIase family.

Probable inactive PPIase with no peptidyl-prolyl cis-trans isomerase activity. This chain is Probable inactive peptidyl-prolyl cis-trans isomerase-like 6, found in Mus musculus (Mouse).